We begin with the raw amino-acid sequence, 760 residues long: Semaphorin-4A (760 aa).

Residues 1 to 32 (MALPSLGQDSWSLLRVFFFQLFLLPSLPPASG) form the signal peptide. Over 33–682 (TGGQGPMPRV…MAAQRSYWPH (650 aa)) the chain is Extracellular. In terms of domain architecture, Sema spans 36–494 (QGPMPRVKYH…FSGGIWRVPR (459 aa)). A disulfide bridge connects residues Cys-113 and Cys-124. Residues Asn-120 and Asn-135 are each glycosylated (N-linked (GlcNAc...) asparagine). 3 cysteine pairs are disulfide-bonded: Cys-142–Cys-151, Cys-269–Cys-379, and Cys-293–Cys-339. The N-linked (GlcNAc...) asparagine glycan is linked to Asn-496. The 52-residue stretch at 496 to 547 (NCSVYESCVDCVLARDPHCAWDPESRLCSLLSGSTKPWKQDMERGNPEWVCT) folds into the PSI domain. Cystine bridges form between Cys-497–Cys-514, Cys-506–Cys-523, and Cys-579–Cys-623. Residues 572 to 630 (NSILELPCPHLSALASYHWSHGRAKISEASATVYNGSLLLLPQDGVGGLYQCVATENGY) form the Ig-like C2-type domain. Residue Asn-606 is glycosylated (N-linked (GlcNAc...) asparagine). Residues 683–703 (FLIVTVLLAIVLLGVLTLLLA) form a helical membrane-spanning segment. Residues 704 to 760 (SPLGALRARGKVQGCGMLPPREKAPLSRDQHLQPSKDHRTSASDVDADNNHLGAEVA) are Cytoplasmic-facing. A disordered region spans residues 720 to 760 (MLPPREKAPLSRDQHLQPSKDHRTSASDVDADNNHLGAEVA). Over residues 723-744 (PREKAPLSRDQHLQPSKDHRTS) the composition is skewed to basic and acidic residues.

It belongs to the semaphorin family. Interacts with PLXNB1, PLXNB2 and PLXNB3. Interacts with PLXND1. Interacts with TIMD2. Expressed in neurons and glia in the developing hippocampus.

The protein resides in the cell membrane. Functionally, cell surface receptor for PLXNB1, PLXNB2, PLXNB3 and PLXND1 that plays an important role in cell-cell signaling. Regulates glutamatergic and GABAergic synapse development. Promotes the development of inhibitory synapses in a PLXNB1-dependent manner and promotes the development of excitatory synapses in a PLXNB2-dependent manner. Plays a role in priming antigen-specific T-cells, promotes differentiation of Th1 T-helper cells, and thereby contributes to adaptive immunity. Promotes phosphorylation of TIMD2. Inhibits angiogenesis. Promotes axon growth cone collapse. Inhibits axonal extension by providing local signals to specify territories inaccessible for growing axons. This chain is Semaphorin-4A (Sema4a), found in Mus musculus (Mouse).